The sequence spans 308 residues: UDP-N-acetylenolpyruvoylglucosamine reductase (308 aa).

An FAD-binding PCMH-type domain is found at 22 to 185 (RVGGPADWLF…TEATFRAEAG (164 aa)). The active site involves Arg165. A compositionally biased stretch (basic and acidic residues) spans 197 to 211 (QIARRDSSQPTKERS). The segment at 197–228 (QIARRDSSQPTKERSAGSTFRNPAGFSSTGRA) is disordered. Over residues 212-226 (AGSTFRNPAGFSSTG) the composition is skewed to polar residues. Ser214 acts as the Proton donor in catalysis. Glu296 is a catalytic residue.

Belongs to the MurB family. FAD serves as cofactor.

It is found in the cytoplasm. It carries out the reaction UDP-N-acetyl-alpha-D-muramate + NADP(+) = UDP-N-acetyl-3-O-(1-carboxyvinyl)-alpha-D-glucosamine + NADPH + H(+). Its pathway is cell wall biogenesis; peptidoglycan biosynthesis. In terms of biological role, cell wall formation. This Cereibacter sphaeroides (strain ATCC 17029 / ATH 2.4.9) (Rhodobacter sphaeroides) protein is UDP-N-acetylenolpyruvoylglucosamine reductase.